We begin with the raw amino-acid sequence, 378 residues long: Heme chaperone HemW (378 aa).

The Radical SAM core domain maps to 1–237; it reads MVKLPPLSLY…LTAAGYQQYE (237 aa). Tyrosine 10 serves as a coordination point for S-adenosyl-L-methionine. Residues cysteine 16, cysteine 20, and cysteine 23 each contribute to the [4Fe-4S] cluster site. Residues glycine 66, 67 to 68, glutamate 99, glutamine 126, arginine 138, and aspartate 163 contribute to the S-adenosyl-L-methionine site; that span reads GT.

The protein belongs to the anaerobic coproporphyrinogen-III oxidase family. HemW subfamily. Binding of the [4Fe-4S] cofactor promotes dimerization. Requires [4Fe-4S] cluster as cofactor.

The protein resides in the cytoplasm. In terms of biological role, probably acts as a heme chaperone, transferring heme to the NarI subunit of the respiratory enzyme nitrate reductase; transfer may be stimulated by NADH. Binds one molecule of heme per monomer, possibly covalently. Heme binding is not affected by either [4Fe-4S] or S-adenosyl-L-methionine (SAM)-binding. Does not have coproporphyrinogen III dehydrogenase activity in vitro. Binds 1 [4Fe-4S] cluster. The cluster is coordinated with 3 cysteines and an exchangeable S-adenosyl-L-methionine. In Escherichia coli (strain K12), this protein is Heme chaperone HemW.